Consider the following 264-residue polypeptide: Proteasome subunit beta type-4 (264 aa).

The residue at position 1 (Met1) is an N-acetylmethionine. The propeptide occupies 1–45 (MEAFWESRAGHWAGGPAPGQFYRIPATPSGLMDPASAPCEGPITR). Phosphotyrosine is present on Tyr102.

Belongs to the peptidase T1B family. In terms of assembly, the 26S proteasome consists of a 20S proteasome core and two 19S regulatory subunits. The 20S proteasome core is a barrel-shaped complex made of 28 subunits that are arranged in four stacked rings. The two outer rings are each formed by seven alpha subunits, and the two inner rings are formed by seven beta subunits. The proteolytic activity is exerted by three beta-subunits PSMB5, PSMB6 and PSMB7. Forms a ternary complex with SMAD1 and OAZ1 before PSMB4 is incorporated into the 20S proteasome. Interacts with PRPF19. As to expression, detected in liver (at protein level).

Its subcellular location is the cytoplasm. It localises to the nucleus. Its function is as follows. Non-catalytic component of the 20S core proteasome complex involved in the proteolytic degradation of most intracellular proteins. This complex plays numerous essential roles within the cell by associating with different regulatory particles. Associated with two 19S regulatory particles, forms the 26S proteasome and thus participates in the ATP-dependent degradation of ubiquitinated proteins. The 26S proteasome plays a key role in the maintenance of protein homeostasis by removing misfolded or damaged proteins that could impair cellular functions, and by removing proteins whose functions are no longer required. Associated with the PA200 or PA28, the 20S proteasome mediates ubiquitin-independent protein degradation. This type of proteolysis is required in several pathways including spermatogenesis (20S-PA200 complex) or generation of a subset of MHC class I-presented antigenic peptides (20S-PA28 complex). SMAD1/OAZ1/PSMB4 complex mediates the degradation of the CREBBP/EP300 repressor SNIP1. The protein is Proteasome subunit beta type-4 (Psmb4) of Mus musculus (Mouse).